A 534-amino-acid polypeptide reads, in one-letter code: Solute carrier family 22 member 15 (534 aa).

A helical membrane pass occupies residues 22–42; sequence FLLAVLLQLYSATEAIIITIL. 3 N-linked (GlcNAc...) asparagine glycosylation sites follow: Asn-52, Asn-58, and Asn-83. The next 11 membrane-spanning stretches (helical) occupy residues 97–117, 136–156, 161–181, 191–211, 216–236, 297–317, 327–347, 356–376, 391–411, 424–444, and 450–470; these read AAYE…IGVI, LALE…PLFL, LVGV…NECI, SLGS…GYFI, LLAL…LCIP, TLIM…LTLS, LNLA…MYLI, GSLA…MLVP, TLSL…YIYS, MGVC…IPAL, and ALPF…SLLL. N-linked (GlcNAc...) asparagine glycosylation is present at Asn-513.

The protein belongs to the major facilitator (TC 2.A.1) superfamily. Organic cation transporter (TC 2.A.1.19) family.

The protein localises to the membrane. Probably transports organic cations. The polypeptide is Solute carrier family 22 member 15 (slc22a15) (Xenopus tropicalis (Western clawed frog)).